The sequence spans 60 residues: UPF0434 protein NMC0623 (60 aa).

The protein belongs to the UPF0434 family.

The sequence is that of UPF0434 protein NMC0623 from Neisseria meningitidis serogroup C / serotype 2a (strain ATCC 700532 / DSM 15464 / FAM18).